A 79-amino-acid polypeptide reads, in one-letter code: Small ribosomal subunit protein uS17 (79 aa).

It belongs to the universal ribosomal protein uS17 family. In terms of assembly, part of the 30S ribosomal subunit.

Functionally, one of the primary rRNA binding proteins, it binds specifically to the 5'-end of 16S ribosomal RNA. The sequence is that of Small ribosomal subunit protein uS17 from Orientia tsutsugamushi (strain Boryong) (Rickettsia tsutsugamushi).